A 485-amino-acid polypeptide reads, in one-letter code: Aprataxin and PNK-like factor (485 aa).

The region spanning 1 to 84 (MSGGFELQPQ…CVLSTHSEME (84 aa)) is the FHA-like domain. Phosphoserine; by ATM is present on S92. The segment at 103–156 (EIPKSSSADLPDKTPSAPRRERSTETAKPQAAANNMSFIGESRDLSKQQPNPSE) is disordered. A Phosphoserine modification is found at S125. The short motif at 157–166 (RKRILPAWML) is the KBM element. Residues 206–348 (GKKRLISSGS…VPNGSEENKV (143 aa)) are disordered. Polar residues-rich tracts occupy residues 212–223 (SSGSSESTSAKQ), 237–249 (SIISSKEMPQSFS), and 286–309 (KGSSNEDSTARSCSESYSSTQSKS). The span at 310-319 (FCDKPQKSHP) shows a compositional bias: basic and acidic residues. A glycoprotein contacts are provided by R350, Y355, Y360, and R361. The PBZ-type 1 zinc finger occupies 351–372 (TSCMYGANCYRKNPVHFQHFSH). The segment at 380–390 (GVNITCQDEAD) is flexible linker. Residues 393–414 (PECPYGASCYRKNPQHKIEYRH) form a PBZ-type 2 zinc finger. 3 residues coordinate a glycoprotein: Y397, Y402, and R403. The interval 420-470 (RSISDEDDNVGQPNEYNLNDSFIDDEEEEYEPTDEDSDWEPEKEDLEKEDM) is disordered. Residues 441 to 469 (FIDDEEEEYEPTDEDSDWEPEKEDLEKED) show a composition bias toward acidic residues. The NAP1L motif motif lies at 449–473 (YEPTDEDSDWEPEKEDLEKEDMEGL).

It belongs to the APLF family. In terms of assembly, interacts with LIG4. Interacts with PARP1. Interacts with XRCC4. Interacts (via KBM motif) with XRCC5 and XRCC6; promoting recruitment to DNA damage sites. Interacts with XRCC1. Interacts (via C-terminal disordered region) with histones; interacts with histone H2A, H2B and H3-H4. Post-translationally, poly-ADP-ribosylated. In addition to binding non covalently poly-ADP-ribose via its PBZ-type zinc fingers, the protein is also covalently poly-ADP-ribosylated by PARP1. In terms of processing, phosphorylated in an ATM-dependent manner upon double-strand DNA break.

The protein resides in the nucleus. The protein localises to the chromosome. It localises to the cytoplasm. It is found in the cytosol. In terms of biological role, histone chaperone involved in single-strand and double-strand DNA break repair. Recruited to sites of DNA damage through interaction with branched poly-ADP-ribose chains, a polymeric post-translational modification synthesized transiently at sites of chromosomal damage to accelerate DNA strand break repair reactions. Following recruitment to DNA damage sites, acts as a histone chaperone that mediates histone eviction during DNA repair and promotes recruitment of histone variant MACROH2A1. Also has a nuclease activity: displays apurinic-apyrimidinic (AP) endonuclease and 3'-5' exonuclease activities in vitro. Also able to introduce nicks at hydroxyuracil and other types of pyrimidine base damage. Together with PARP3, promotes the retention of the LIG4-XRCC4 complex on chromatin and accelerate DNA ligation during non-homologous end-joining (NHEJ). Also acts as a negative regulator of cell pluripotency by promoting histone exchange. Required for the embryo implantation during the epithelial to mesenchymal transition in females. This Bos taurus (Bovine) protein is Aprataxin and PNK-like factor (APLF).